The following is a 445-amino-acid chain: POU domain, class 3, transcription factor 2 (445 aa).

Disordered regions lie at residues 64–173 (ALSH…WRSA) and 203–269 (LGAG…TPTS). The span at 67-90 (HGGGGGGGGGGGGGGGGGGGGGDG) shows a compositional bias: gly residues. Composition is skewed to low complexity over residues 125–151 (QQQHQQQQQQQQQQQQQQQQQQQQQQQ) and 163–173 (HHPGPGAWRSA). The segment covering 217–226 (LRDAHDEPHH) has biased composition (basic and acidic residues). Positions 227 to 237 (ADHHPHPHSHP) are enriched in basic residues. Over residues 239 to 253 (QQPPPPPPPQGPPGH) the composition is skewed to pro residues. The region spanning 264 to 338 (EDTPTSDDLE…LLNKWLEEAD (75 aa)) is the POU-specific domain. Serine 343 bears the Phosphoserine mark. A DNA-binding region (homeobox) is located at residues 356-415 (KRKKRTSIEVSVKGALESHFLKCPKPSAQEITSLADSLQLEKEVVRVWFCNRRQKEKRMT). Residues 411-445 (EKRMTPPGGTLPGAEDVYGGSRDTPPHHGVQTPVQ) are disordered.

This sequence belongs to the POU transcription factor family. Class-3 subfamily. As to quaternary structure, interacts with PQBP1. Interaction with ISL1. In terms of tissue distribution, expressed specifically in the neuroectodermal cell lineage.

Its subcellular location is the nucleus. Functionally, transcription factor that plays a key role in neuronal differentiation. Binds preferentially to the recognition sequence which consists of two distinct half-sites, ('GCAT') and ('TAAT'), separated by a non-conserved spacer region of 0, 2, or 3 nucleotides. Acts as a transcriptional activator when binding cooperatively with SOX4, SOX11, or SOX12 to gene promoters. The combination of three transcription factors, ASCL1, POU3F2/BRN2 and MYT1L, is sufficient to reprogram fibroblasts and other somatic cells into induced neuronal (iN) cells in vitro. Acts downstream of ASCL1, accessing chromatin that has been opened by ASCL1, and promotes transcription of neuronal genes. This is POU domain, class 3, transcription factor 2 (Pou3f2) from Mus musculus (Mouse).